The following is a 470-amino-acid chain: MKVLVVDAGGRGNAIAHAFSRSEQVKEIYIAPGNGGSEFFEKCKIAELDGKKIPSIRAIDEIVRFAKKCEVDLAYIGPEEPLSLGLVDRLEEEGIPAVGPKKEATILEASKCWAKDFLKRIGVPIPEYANFDNPEEAKEYIREKFNNGIVVKADGLAAGKGVYVCDSVEEALRAVDEIMVQKKFGEAGNRIVVEERLRGIEVAFTAMTDGKTVKPFGHARDYKRAFDSDDIEGLRDFYIGLTKKFYTKAQIEQLYREGKLINPNTGGMGAVSPHPAVTEEVEQRIMEMVVEPIIENFDKEFKGVLYPVIMLVEENGELIPKVLEINVRDCDPGAEAKLPRLKSDMAEISMAVVEGRLDEVEMRFSSDYCVAVCAVSGALKGREGLKPGYPADHYTSQPITGIEEAMKEAIIYANGIAKTNGYVTTGGRVLTVVGMGQSIEEARSKAYSALEKISFPGMRYRRTIGLDVPE.

One can recognise an ATP-grasp domain in the interval 115–354 (KDFLKRIGVP…MAEISMAVVE (240 aa)). 142–203 (REKFNNGIVV…EERLRGIEVA (62 aa)) serves as a coordination point for ATP. Residues glutamate 324 and asparagine 326 each contribute to the Mg(2+) site.

This sequence belongs to the GARS family. Mg(2+) is required as a cofactor. Mn(2+) serves as cofactor.

The catalysed reaction is 5-phospho-beta-D-ribosylamine + glycine + ATP = N(1)-(5-phospho-beta-D-ribosyl)glycinamide + ADP + phosphate + H(+). Its pathway is purine metabolism; IMP biosynthesis via de novo pathway; N(1)-(5-phospho-D-ribosyl)glycinamide from 5-phospho-alpha-D-ribose 1-diphosphate: step 2/2. The sequence is that of Phosphoribosylamine--glycine ligase (purD) from Archaeoglobus fulgidus (strain ATCC 49558 / DSM 4304 / JCM 9628 / NBRC 100126 / VC-16).